The following is a 363-amino-acid chain: Aminomethyltransferase (363 aa).

The protein belongs to the GcvT family. The glycine cleavage system is composed of four proteins: P, T, L and H.

The enzyme catalyses N(6)-[(R)-S(8)-aminomethyldihydrolipoyl]-L-lysyl-[protein] + (6S)-5,6,7,8-tetrahydrofolate = N(6)-[(R)-dihydrolipoyl]-L-lysyl-[protein] + (6R)-5,10-methylene-5,6,7,8-tetrahydrofolate + NH4(+). Its function is as follows. The glycine cleavage system catalyzes the degradation of glycine. The polypeptide is Aminomethyltransferase (Staphylococcus saprophyticus subsp. saprophyticus (strain ATCC 15305 / DSM 20229 / NCIMB 8711 / NCTC 7292 / S-41)).